A 391-amino-acid chain; its full sequence is Leucine-rich repeat-containing protein 74B (391 aa).

A disordered region spans residues 1 to 38; that stretch reads MKGPCEVQKNEDQEGEAAATGPQAETLEAERSWTADSH. Over residues 28-38 the composition is skewed to basic and acidic residues; it reads EAERSWTADSH. 9 LRR repeats span residues 106 to 126, 134 to 154, 162 to 182, 190 to 211, 218 to 239, 246 to 259, 274 to 294, 302 to 323, and 332 to 354; these read YIKR…EALA, IISD…QAIC, TVEK…QHLA, GLKS…ILGP, GLTE…AFAR, FLKV…GFGD, VLEE…LKLG, TLRI…GLLK, and ALEL…ASSM. The segment at 371–391 is disordered; the sequence is KDWPQASTPSQPASAPSDSGL. Over residues 374-391 the composition is skewed to low complexity; it reads PQASTPSQPASAPSDSGL.

This Mus musculus (Mouse) protein is Leucine-rich repeat-containing protein 74B.